The sequence spans 405 residues: D-threonate kinase (405 aa).

Residues Asp12, Arg59, and 88–91 (KVDS) each bind substrate. Residues Ser243, 337 to 340 (GGDG), and Gly383 contribute to the ATP site.

This sequence belongs to the four-carbon acid sugar kinase family.

It carries out the reaction D-threonate + ATP = 4-O-phospho-D-threonate + ADP + H(+). Its function is as follows. Catalyzes the ATP-dependent phosphorylation of D-threonate to D-threonate 4-phosphate. Can also phosphorylate 4-hydroxy-L-threonine, with lower efficiency. This Bordetella bronchiseptica (strain ATCC BAA-588 / NCTC 13252 / RB50) (Alcaligenes bronchisepticus) protein is D-threonate kinase.